Reading from the N-terminus, the 417-residue chain is Phosphoglycerate kinase 2 (417 aa).

At S2 the chain carries N-acetylserine. S2 and S4 each carry phosphoserine. An N6-acetyllysine modification is found at K11. The (2R)-3-phosphoglycerate site is built by V23, D24, F25, N26, Q38, and R39. Residue K48 is modified to N6-acetyllysine. (2R)-3-phosphoglycerate-binding residues include S62, H63, G65, and R66. K75, K86, and K97 each carry N6-acetyllysine. (2R)-3-phosphoglycerate-binding residues include L122 and R123. N6-acetyllysine occurs at positions 131 and 146. H170 and R171 together coordinate (2R)-3-phosphoglycerate. A Phosphotyrosine modification is found at Y196. K199 carries the N6-acetyllysine modification. Residue G214 coordinates ADP. CDP is bound at residue G214. AMP-binding residues include A215 and K216. A215 provides a ligand contact to ATP. A215 contributes to the Mg(2+) binding site. The Mg(2+) site is built by A218 and D219. D219 lines the CDP pocket. K220 contacts AMP. An ATP-binding site is contributed by K220. G238 contributes to the ADP binding site. Position 238 (G238) interacts with CDP. G239 serves as a coordination point for AMP. G239 provides a ligand contact to ATP. N6-acetyllysine occurs at positions 267 and 291. G313 contributes to the AMP binding site. Residue G313 coordinates ATP. CDP contacts are provided by G338 and F343. F343 is an ADP binding site. E344 lines the AMP pocket. Residues E344, D375, and T376 each contribute to the ATP site. Residue D375 participates in Mg(2+) binding.

Belongs to the phosphoglycerate kinase family. As to quaternary structure, monomer. Requires Mg(2+) as cofactor. Mainly found in round spermatids. Localized on the principle piece in the sperm (at protein level). Testis-specific. Expression significantly decreased in the testis of elderly men.

It localises to the cytoplasm. It catalyses the reaction (2R)-3-phosphoglycerate + ATP = (2R)-3-phospho-glyceroyl phosphate + ADP. It functions in the pathway carbohydrate degradation; glycolysis; pyruvate from D-glyceraldehyde 3-phosphate: step 2/5. Essential for sperm motility and male fertility. Not required for the completion of spermatogenesis. The chain is Phosphoglycerate kinase 2 (PGK2) from Homo sapiens (Human).